Consider the following 208-residue polypeptide: Guanylate kinase (208 aa).

Positions glycine 5 to glutamate 184 constitute a Guanylate kinase-like domain. Glycine 12 to glycine 19 provides a ligand contact to ATP.

This sequence belongs to the guanylate kinase family.

Its subcellular location is the cytoplasm. It carries out the reaction GMP + ATP = GDP + ADP. Its function is as follows. Essential for recycling GMP and indirectly, cGMP. The sequence is that of Guanylate kinase from Streptococcus pneumoniae (strain ATCC BAA-255 / R6).